We begin with the raw amino-acid sequence, 350 residues long: Phosphotriesterase-related protein (350 aa).

A divalent metal cation-binding residues include His-22, His-24, Glu-169, His-201, His-230, and Asp-298.

Belongs to the metallo-dependent hydrolases superfamily. Phosphotriesterase family. A divalent metal cation serves as cofactor.

This Drosophila yakuba (Fruit fly) protein is Phosphotriesterase-related protein.